The primary structure comprises 430 residues: Tol-Pal system protein TolB (430 aa).

An N-terminal signal peptide occupies residues Met-1–Ala-21.

The protein belongs to the TolB family. In terms of assembly, the Tol-Pal system is composed of five core proteins: the inner membrane proteins TolA, TolQ and TolR, the periplasmic protein TolB and the outer membrane protein Pal. They form a network linking the inner and outer membranes and the peptidoglycan layer.

Its subcellular location is the periplasm. Part of the Tol-Pal system, which plays a role in outer membrane invagination during cell division and is important for maintaining outer membrane integrity. TolB occupies a key intermediary position in the Tol-Pal system because it communicates directly with both membrane-embedded components, Pal in the outer membrane and TolA in the inner membrane. The polypeptide is Tol-Pal system protein TolB (Shigella flexneri serotype 5b (strain 8401)).